Reading from the N-terminus, the 970-residue chain is Cullin-4B (970 aa).

A compositionally biased stretch (basic and acidic residues) spans 1–14; sequence MSRSTRSKERREND. Disordered regions lie at residues 1–157 and 189–211; these read MSRS…SFCL and AEES…QQQQ. T15 carries the post-translational modification Phosphothreonine. S17 carries the phosphoserine modification. Pro residues predominate over residues 36-57; sequence PPRPPYPPLLPPVFPPPTPPPQ. Residues 78 to 98 are compositionally biased toward low complexity; that stretch reads SGFSSPNPSAASAAAQEVRSA. Residues 99 to 109 show a composition bias toward polar residues; it reads TDGNTSTTPPT. T106 is modified (phosphothreonine). Phosphoserine is present on S110. The short motif at 112 to 115 is the Nuclear localization signal element; it reads KKRK. Positions 117 to 126 are enriched in low complexity; it reads NSSSSSSNSS. Polar residues predominate over residues 146 to 155; the sequence is DSASPSTSSF. Phosphoserine occurs at positions 154 and 200. Residues 192 to 211 are compositionally biased toward low complexity; sequence SSSSSSSSSPTAATSQQQQQ. The residue at position 202 (T202) is a Phosphothreonine. K247 participates in a covalent cross-link: Glycyl lysine isopeptide (Lys-Gly) (interchain with G-Cter in ubiquitin). At S250 the chain carries Phosphoserine. Residues 902–962 enclose the Cullin neddylation domain; the sequence is DRQYQIDAAI…RDYMERDKEN (61 aa). K916 participates in a covalent cross-link: Glycyl lysine isopeptide (Lys-Gly) (interchain with G-Cter in NEDD8).

The protein belongs to the cullin family. Component of multiple DCX (DDB1-CUL4-X-box) E3 ubiquitin-protein ligase complexes that seem to be formed of DDB1, CUL4A or CUL4B, RBX1 and a variable substrate recognition component which seems to belong to a protein family described as DCAF (Ddb1- and Cul4-associated factor) or CDW (CUL4-DDB1-associated WD40-repeat) proteins. Component of the DCX(DTL) complex with the putative substrate recognition component DTL. Component of the DCX(DDB2) complex with the putative substrate recognition component DDB2. Component of DCX complexes part of the DesCEND (destruction via C-end degrons) pathway, which contain either TRPC4AP or DCAF12 as substrate-recognition component. Component of the DCX(AMBRA1) complex with the substrate recognition component AMBRA1. Part of a complex with RBX1 and TIP120A/CAND1. Component of the DCX(WDR77) complex, composed of Cul4b, Ddb1, Wdr77 and Rbx1. Interacts with RBX1, GRWD1, MLST8, SMU1, TLE2, TLE3, DCAF1, DDA1, DCAF6, DCAF17, DDB2, DCAF8, TIP120A/CAND1 and TMEM113. Interacts with cyclin E (CCNE1 or CCNE2) and with importins alpha-1 (KPNA2), alpha-3 (KPNA4), alpha-5 (KPNA1) and beta-1 (KPNB1). May interact with WDR26, WDR51B, SNRNP40, WDR61, WDR76 and WDR5. Interacts (unneddylated form) with DCUN1D1, DCUN1D2, DCUN1D3, DCUN1D4 and DCUN1D5; these interactions promote the cullin neddylation. In terms of processing, neddylated. Deneddylated via its interaction with the COP9 signalosome (CSN) complex. Expressed in oocytes (at protein level).

It is found in the cytoplasm. It localises to the nucleus. It functions in the pathway protein modification; protein ubiquitination. Core component of multiple cullin-RING-based E3 ubiquitin-protein ligase complexes which mediate the ubiquitination and subsequent proteasomal degradation of target proteins. The functional specificity of the E3 ubiquitin-protein ligase complex depends on the variable substrate recognition subunit. CUL4B may act within the complex as a scaffold protein, contributing to catalysis through positioning of the substrate and the ubiquitin-conjugating enzyme. Plays a role as part of the E3 ubiquitin-protein ligase complex in polyubiquitination of CDT1, histone H2A, histone H3 and histone H4 in response to radiation-induced DNA damage. Targeted to UV damaged chromatin by DDB2 and may be important for DNA repair and DNA replication. A number of DCX complexes (containing either TRPC4AP or DCAF12 as substrate-recognition component) are part of the DesCEND (destruction via C-end degrons) pathway, which recognizes a C-degron located at the extreme C terminus of target proteins, leading to their ubiquitination and degradation. The DCX(AMBRA1) complex is a master regulator of the transition from G1 to S cell phase by mediating ubiquitination of phosphorylated cyclin-D (CCND1, CCND2 and CCND3). The DCX(AMBRA1) complex also acts as a regulator of Cul5-RING (CRL5) E3 ubiquitin-protein ligase complexes by mediating ubiquitination and degradation of Elongin-C (ELOC) component of CRL5 complexes. Required for ubiquitination of cyclin E (CCNE1 or CCNE2), and consequently, normal G1 cell cycle progression. Component of the DCX(WDR77) complex, which mediates ubiquitination and degradation of Irgm1 in intestinal cells. Regulates the mammalian target-of-rapamycin (mTOR) pathway involved in control of cell growth, size and metabolism. Specific CUL4B regulation of the mTORC1-mediated pathway is dependent upon 26S proteasome function and requires interaction between CUL4B and MLST8. With CUL4A, contributes to ribosome biogenesis. The protein is Cullin-4B of Mus musculus (Mouse).